Reading from the N-terminus, the 260-residue chain is Late transcription factor 1 (260 aa).

It belongs to the chordopoxvirinae VLTF-1 family. As to quaternary structure, interacts with the late transcription factors VLTF-2 and VLTF-3. Interacts with the late transcription elongation factor H5/VLTF-4. Interacts with itself.

Functionally, associates with RNA polymerase to initiate transcription from late gene promoters. The chain is Late transcription factor 1 (VLTF1) from Vertebrata (FPV).